The chain runs to 286 residues: Bifunctional protein FolD (286 aa).

Residues glycine 165–serine 167 and serine 190 each bind NADP(+).

Belongs to the tetrahydrofolate dehydrogenase/cyclohydrolase family. Homodimer.

The enzyme catalyses (6R)-5,10-methylene-5,6,7,8-tetrahydrofolate + NADP(+) = (6R)-5,10-methenyltetrahydrofolate + NADPH. It carries out the reaction (6R)-5,10-methenyltetrahydrofolate + H2O = (6R)-10-formyltetrahydrofolate + H(+). Its pathway is one-carbon metabolism; tetrahydrofolate interconversion. Its function is as follows. Catalyzes the oxidation of 5,10-methylenetetrahydrofolate to 5,10-methenyltetrahydrofolate and then the hydrolysis of 5,10-methenyltetrahydrofolate to 10-formyltetrahydrofolate. The sequence is that of Bifunctional protein FolD from Staphylococcus aureus (strain USA300).